Here is a 125-residue protein sequence, read N- to C-terminus: Large ribosomal subunit protein bL12 (125 aa).

The protein belongs to the bacterial ribosomal protein bL12 family. As to quaternary structure, homodimer. Part of the ribosomal stalk of the 50S ribosomal subunit. Forms a multimeric L10(L12)X complex, where L10 forms an elongated spine to which 2 to 4 L12 dimers bind in a sequential fashion. Binds GTP-bound translation factors.

Forms part of the ribosomal stalk which helps the ribosome interact with GTP-bound translation factors. Is thus essential for accurate translation. In Campylobacter lari (strain RM2100 / D67 / ATCC BAA-1060), this protein is Large ribosomal subunit protein bL12.